The sequence spans 963 residues: MERREEQLGAAGAGAAPALDFTVENVEKALHQLYYDPNIDNKNLAQKWLMQAQVSPQAWHFSWQLLQPDKVPEIQYFGASALHIKISRYWSDIPTDQYESLKAQLFTQITRFASGSKIVLTRLCVALASLALSMMPDAWPCAVADMVRLFQAEDSPVDSQGRCLALLELLTVLPEEFQTSRLPQYRKGLVRTSLAVECGTVFPLLEQLLQQPSSPSCVRQKVLKCFSSWVQLEVPLQDCEALIQAAFAALQDSELFDSSVEAIVNAISQPDAQRYVNTLLKLIPLVLGLQEQLRQAVQNGDMETSHGICRIAVALGENHSRALLDQVEHWQSFLALVNMIMFCTGIPGHYPVNETTSSLTLTFWYTLQDDILSFEAEKQAVYQQVYRPVYFQLVDVLLHKAQFPSDEEYGFWSSDEKEQFRIYRVDISDTLMYVYEMLGAELLSNLYDKLGRLLTSSEEPYSWQHTEALLYGFQSIAETIDVNYSDVVPGLIGLIPRISISNVQLADTVMFTIGALSEWLADHPVMINSVLPLVLHALGNPELSVSSVSTLKKICRECKYDLPPYAANIVAVSQDVLMKQIHKTSQCMWLMQALGFLLSALQVEEILKNLHSLISPYIQQLEKLAEEIPNPSNKLAIVHILGLLSNLFTTLDVSHHEDDHEGPELRKLPVPQGPNPVVVVLQQVFQLIQKVLSKWLNDAQVVEAVCAIFEKSVKTLLDDFAPMVPQLCEMLGRMYSTVPQASALDLTRQLVHIFAHEPAHFPPIEALFLLVTSVTLSLFQQGPRDHPDIVDSFMQLLAQALKRKPDLFLCERLDVKAVFQCAVLALKFPEAPTVKASCGFFTELLPRCGEIESVGKVVQEDGRMLLIAVLEAIGGQASRSLMDCFADILFALNKHCFSLLSMWIKEALQPPGFPSARLSPEQKDTFSQQILRERVNKRRVKEMVKEFTLLCRGLHGTDYTADY.

HEAT repeat units follow at residues Glu-24–Val-54, Pro-56–Arg-88, Thr-95–Met-135, Ala-142–Thr-179, Leu-194–Gln-231, Leu-236–Ser-268, Val-276–Asp-325, Trp-330–Leu-372, Glu-375–Leu-438, Ala-440–Ile-476, Val-487–Asp-522, Pro-524–Cys-558, Leu-562–Ala-600, Val-603–Phe-648, Pro-676–Leu-716, Phe-720–Phe-754, Phe-761–Arg-803, Val-815–Leu-845, Glu-860–Asn-893, and Phe-897–Leu-931. The Importin N-terminal domain occupies Ala-45–Arg-111.

It belongs to the importin beta family. In terms of assembly, interacts with UBC9, RAN, RBM8A, eIF-1A and PAX6.

It is found in the cytoplasm. The protein localises to the nucleus. Functionally, functions in nuclear protein import as nuclear transport receptor. Serves as receptor for nuclear localization signals (NLS) in cargo substrates. Is thought to mediate docking of the importin/substrate complex to the nuclear pore complex (NPC) through binding to nucleoporin and the complex is subsequently translocated through the pore by an energy requiring, Ran-dependent mechanism. At the nucleoplasmic side of the NPC, Ran binds to the importin, the importin/substrate complex dissociates and importin is re-exported from the nucleus to the cytoplasm where GTP hydrolysis releases Ran. The directionality of nuclear import is thought to be conferred by an asymmetric distribution of the GTP- and GDP-bound forms of Ran between the cytoplasm and nucleus. Mediates the nuclear import of UBC9, the RBM8A/MAGOH complex, PAX6 and probably other members of the paired homeobox family. Also mediates nuclear export of eIF-1A, and the cytoplasmic release of eIF-1A is triggered by the loading of import substrates onto IPO13. The polypeptide is Importin-13 (Ipo13) (Mus musculus (Mouse)).